Reading from the N-terminus, the 153-residue chain is Arachidonate 5-lipoxygenase-activating protein (153 aa).

The Lumenal segment spans residues 1–8 (MDQETVGN). The helical transmembrane segment at 9–30 (IVLLAIVTLISVVQNGFFAHKV) threads the bilayer. Residues 31–52 (EHESKTHNGRSFQRTGPLAFER) are Cytoplasmic-facing. A helical membrane pass occupies residues 53 to 77 (VYTANQNCVDAYPTFLVMLWSAGLL). Over 78–80 (CSQ) the chain is Lumenal. Residues 81–102 (VPAAFAGLMYLFVRQKYFVGYL) traverse the membrane as a helical segment. Over 103-107 (GERTQ) the chain is Cytoplasmic. An intramembrane segment occupies 108-115 (STPGYIFG). The helical transmembrane segment at 116-128 (KRIILFLFAMSLA) threads the bilayer. Residues 129-153 (GILNYFLIAFFGSDFENYIKTVTTT) lie on the Lumenal side of the membrane.

It belongs to the MAPEG family. As to quaternary structure, homotrimer. Interacts with LTC4S and ALOX5.

The protein resides in the nucleus membrane. Its subcellular location is the endoplasmic reticulum membrane. In terms of biological role, required for leukotriene biosynthesis by ALOX5 (5-lipoxygenase). Anchors ALOX5 to the membrane. Binds arachidonic acid, and could play an essential role in the transfer of arachidonic acid to ALOX5. Binds to MK-886, a compound that blocks the biosynthesis of leukotrienes. In Ovis aries (Sheep), this protein is Arachidonate 5-lipoxygenase-activating protein (ALOX5AP).